The chain runs to 264 residues: Acyl-[acyl-carrier-protein]--UDP-N-acetylglucosamine O-acyltransferase (264 aa).

The protein belongs to the transferase hexapeptide repeat family. LpxA subfamily. As to quaternary structure, homotrimer.

The protein localises to the cytoplasm. The catalysed reaction is a (3R)-hydroxyacyl-[ACP] + UDP-N-acetyl-alpha-D-glucosamine = a UDP-3-O-[(3R)-3-hydroxyacyl]-N-acetyl-alpha-D-glucosamine + holo-[ACP]. The protein operates within glycolipid biosynthesis; lipid IV(A) biosynthesis; lipid IV(A) from (3R)-3-hydroxytetradecanoyl-[acyl-carrier-protein] and UDP-N-acetyl-alpha-D-glucosamine: step 1/6. Its function is as follows. Involved in the biosynthesis of lipid A, a phosphorylated glycolipid that anchors the lipopolysaccharide to the outer membrane of the cell. In Rickettsia typhi (strain ATCC VR-144 / Wilmington), this protein is Acyl-[acyl-carrier-protein]--UDP-N-acetylglucosamine O-acyltransferase.